A 247-amino-acid chain; its full sequence is NAD(P)H-quinone oxidoreductase subunit K (247 aa).

[4Fe-4S] cluster contacts are provided by Cys-63, Cys-64, Cys-128, and Cys-159.

Belongs to the complex I 20 kDa subunit family. As to quaternary structure, NDH-1 can be composed of about 15 different subunits; different subcomplexes with different compositions have been identified which probably have different functions. It depends on [4Fe-4S] cluster as a cofactor.

It is found in the cellular thylakoid membrane. The catalysed reaction is a plastoquinone + NADH + (n+1) H(+)(in) = a plastoquinol + NAD(+) + n H(+)(out). It carries out the reaction a plastoquinone + NADPH + (n+1) H(+)(in) = a plastoquinol + NADP(+) + n H(+)(out). NDH-1 shuttles electrons from an unknown electron donor, via FMN and iron-sulfur (Fe-S) centers, to quinones in the respiratory and/or the photosynthetic chain. The immediate electron acceptor for the enzyme in this species is believed to be plastoquinone. Couples the redox reaction to proton translocation, and thus conserves the redox energy in a proton gradient. Cyanobacterial NDH-1 also plays a role in inorganic carbon-concentration. The polypeptide is NAD(P)H-quinone oxidoreductase subunit K (Microcystis aeruginosa (strain NIES-843 / IAM M-2473)).